The following is a 247-amino-acid chain: Probable transcriptional regulatory protein TDE_1487 (247 aa).

It belongs to the TACO1 family.

It localises to the cytoplasm. The protein is Probable transcriptional regulatory protein TDE_1487 of Treponema denticola (strain ATCC 35405 / DSM 14222 / CIP 103919 / JCM 8153 / KCTC 15104).